Consider the following 327-residue polypeptide: Serine/threonine-protein phosphatase PP1-beta catalytic subunit (327 aa).

A2 is subject to N-acetylalanine. D63, H65, D91, and N123 together coordinate Mn(2+). H124 functions as the Proton donor in the catalytic mechanism. Positions 172 and 247 each coordinate Mn(2+). The interval Q305–R327 is disordered.

This sequence belongs to the PPP phosphatase family. PP-1 subfamily. The cofactor is Mn(2+).

It is found in the cytoplasm. It localises to the nucleus. It catalyses the reaction O-phospho-L-seryl-[protein] + H2O = L-seryl-[protein] + phosphate. The enzyme catalyses O-phospho-L-threonyl-[protein] + H2O = L-threonyl-[protein] + phosphate. Its function is as follows. Protein phosphatase that associates with over 200 regulatory proteins to form highly specific holoenzymes which dephosphorylate hundreds of biological targets. Protein phosphatase (PP1) is essential for cell division, it participates in the regulation of glycogen metabolism, muscle contractility and protein synthesis. Involved in regulation of ionic conductances and long-term synaptic plasticity. This chain is Serine/threonine-protein phosphatase PP1-beta catalytic subunit (ppp1cb), found in Xenopus laevis (African clawed frog).